The primary structure comprises 223 residues: MKRTKSIHHASFRKSWSARHLTPVALAVTAVFMLAGCEKSDETVSLYQNADDCSAANPGKSAECTTAYNNALKEAERTAPKYATREDCVAEFGEGQCQQAPAQAGMAPENQAQSQQSSGSFWMPLMAGYMMGRLMGGGAGFAQQPLFSSKNPASPAYGKYTDAAGKNYGAAQPGRTMTVPKTAMAPKPATTTTVTRGGFGESVAKQSTMQRSAAGTSTRSMGG.

The interval 201-223 (ESVAKQSTMQRSAAGTSTRSMGG) is disordered. Residues 204 to 223 (AKQSTMQRSAAGTSTRSMGG) show a composition bias toward polar residues.

It belongs to the UPF0441 family.

The protein is UPF0441 protein YgiB of Salmonella gallinarum (strain 287/91 / NCTC 13346).